The sequence spans 211 residues: Vascular-related unknown protein 1 (211 aa).

The span at M1–Q12 shows a compositional bias: polar residues. The disordered stretch occupies residues M1–W40. A compositionally biased stretch (basic and acidic residues) spans N13–E37.

In terms of tissue distribution, expressed in vascular tissues of cotyledons, rosette leaves, sepals, petals, anther filaments. Expressed in roots, inflorescence stems and developing seeds.

It localises to the cytoplasm. It is found in the nucleus. In terms of biological role, involved in the regulation of xylem development and growth. May regulate secondary wall formation during vascular development by modulation of brassinosteroid, gibberellin and auxin hormone signaling pathways. The sequence is that of Vascular-related unknown protein 1 from Arabidopsis thaliana (Mouse-ear cress).